The following is a 546-amino-acid chain: Probable malate:quinone oxidoreductase (546 aa).

The protein belongs to the MQO family. FAD is required as a cofactor.

The catalysed reaction is (S)-malate + a quinone = a quinol + oxaloacetate. It functions in the pathway carbohydrate metabolism; tricarboxylic acid cycle; oxaloacetate from (S)-malate (quinone route): step 1/1. This is Probable malate:quinone oxidoreductase from Acinetobacter baumannii (strain AB0057).